The sequence spans 194 residues: Holliday junction branch migration complex subunit RuvA (194 aa).

Positions 1-64 (MIGRLRGVLT…DDSAALYGFL (64 aa)) are domain I. A domain II region spans residues 65-140 (SESERRLFRH…RAADFNNGIS (76 aa)). The flexible linker stretch occupies residues 140 to 144 (STSGK). Residues 145–194 (LNLDTVSEAALALQQLGYKPAEAARMARDAGTESDDVAIVIKKALQTVLR) form a domain III region.

The protein belongs to the RuvA family. In terms of assembly, homotetramer. Forms an RuvA(8)-RuvB(12)-Holliday junction (HJ) complex. HJ DNA is sandwiched between 2 RuvA tetramers; dsDNA enters through RuvA and exits via RuvB. An RuvB hexamer assembles on each DNA strand where it exits the tetramer. Each RuvB hexamer is contacted by two RuvA subunits (via domain III) on 2 adjacent RuvB subunits; this complex drives branch migration. In the full resolvosome a probable DNA-RuvA(4)-RuvB(12)-RuvC(2) complex forms which resolves the HJ.

The protein resides in the cytoplasm. The RuvA-RuvB-RuvC complex processes Holliday junction (HJ) DNA during genetic recombination and DNA repair, while the RuvA-RuvB complex plays an important role in the rescue of blocked DNA replication forks via replication fork reversal (RFR). RuvA specifically binds to HJ cruciform DNA, conferring on it an open structure. The RuvB hexamer acts as an ATP-dependent pump, pulling dsDNA into and through the RuvAB complex. HJ branch migration allows RuvC to scan DNA until it finds its consensus sequence, where it cleaves and resolves the cruciform DNA. This is Holliday junction branch migration complex subunit RuvA from Xylella fastidiosa (strain M23).